The primary structure comprises 395 residues: Probable peptidoglycan glycosyltransferase FtsW (395 aa).

Residues 1–24 (MADLAAGVAERGPRLSLWSSLDQR) are Cytoplasmic-facing. Residues 25–45 (LVWVVAATALLGLVMVASASI) form a helical membrane-spanning segment. The Periplasmic segment spans residues 46 to 62 (SMAEQATGDPFYFFKRQ). A helical membrane pass occupies residues 63–83 (IFFALLGLGMALALLQIPLAT). Residues 84 to 86 (WER) lie on the Cytoplasmic side of the membrane. The chain crosses the membrane as a helical span at residues 87–107 (AGPGLLLGALALLVLVLIPGV). At 108 to 116 (GREVNGAVR) the chain is on the periplasmic side. Residues 117 to 137 (WIPLGVFNLQVAEVVKVLLAL) form a helical membrane-spanning segment. Residues 138-152 (YLAGFLVRRQQQLRT) are Cytoplasmic-facing. A helical transmembrane segment spans residues 153–173 (SMAAFLVPVLVSAACAFLLLL). The Periplasmic segment spans residues 174–178 (QPDFG). A helical membrane pass occupies residues 179-199 (TALMLMALAVGLLYLAGAPLW). A topological domain (cytoplasmic) is located at residue Arg200. The helical transmembrane segment at 201-221 (FAALVGVLAAAAAALVVYSPY) threads the bilayer. Residues 222–276 (RWQRVTAFMDPWSDPFNTGFQLTQSLIAIGRGDWLGVGLGGSVQKLFYLPEAHTD) are Periplasmic-facing. A helical transmembrane segment spans residues 277–297 (FVFSVLAEELGWLGVLAVVLL). The Cytoplasmic segment spans residues 298–316 (FSYIVWRAMAVGWQCHRHR). The helical transmembrane segment at 317–337 (LPFAGYLAWAVGLALGLQAFI) threads the bilayer. At 338 to 352 (NMGVATGLLPTKGLT) the chain is on the periplasmic side. The chain crosses the membrane as a helical span at residues 353–373 (LPLFSYGGSSALATGAMVGLL). Over 374–395 (LRCGYELAQARAEGRRPEEAAS) the chain is Cytoplasmic.

It belongs to the SEDS family. FtsW subfamily.

Its subcellular location is the cell inner membrane. The catalysed reaction is [GlcNAc-(1-&gt;4)-Mur2Ac(oyl-L-Ala-gamma-D-Glu-L-Lys-D-Ala-D-Ala)](n)-di-trans,octa-cis-undecaprenyl diphosphate + beta-D-GlcNAc-(1-&gt;4)-Mur2Ac(oyl-L-Ala-gamma-D-Glu-L-Lys-D-Ala-D-Ala)-di-trans,octa-cis-undecaprenyl diphosphate = [GlcNAc-(1-&gt;4)-Mur2Ac(oyl-L-Ala-gamma-D-Glu-L-Lys-D-Ala-D-Ala)](n+1)-di-trans,octa-cis-undecaprenyl diphosphate + di-trans,octa-cis-undecaprenyl diphosphate + H(+). It functions in the pathway cell wall biogenesis; peptidoglycan biosynthesis. Its function is as follows. Peptidoglycan polymerase that is essential for cell division. The chain is Probable peptidoglycan glycosyltransferase FtsW from Halorhodospira halophila (strain DSM 244 / SL1) (Ectothiorhodospira halophila (strain DSM 244 / SL1)).